Consider the following 150-residue polypeptide: Transcriptional regulator MraZ (150 aa).

2 consecutive SpoVT-AbrB domains span residues 11-53 (TYTP…PFDE) and 82-125 (AVDQ…NKDT).

This sequence belongs to the MraZ family. In terms of assembly, forms oligomers.

It localises to the cytoplasm. Its subcellular location is the nucleoid. This Bifidobacterium longum (strain NCC 2705) protein is Transcriptional regulator MraZ.